A 105-amino-acid chain; its full sequence is Replication restart protein PriB (105 aa).

One can recognise an SSB domain in the interval 1–102 (MTANRLVLTG…LHAEQIELID (102 aa)).

It belongs to the PriB family. As to quaternary structure, homodimer. Interacts with PriA and DnaT. Component of the replication restart primosome. Primosome assembly occurs via a 'hand-off' mechanism. PriA binds to replication forks, subsequently PriB then DnaT bind; DnaT then displaces ssDNA to generate the helicase loading substrate.

Functionally, involved in the restart of stalled replication forks, which reloads the replicative helicase on sites other than the origin of replication; the PriA-PriB pathway is the major replication restart pathway. During primosome assembly it facilitates complex formation between PriA and DnaT on DNA; stabilizes PriA on DNA. Stimulates the DNA unwinding activity of PriA helicase. The chain is Replication restart protein PriB from Proteus mirabilis (strain HI4320).